We begin with the raw amino-acid sequence, 706 residues long: Fatty acid oxidation complex subunit alpha (706 aa).

The tract at residues 1 to 188 (MEKTFNLTRR…KMGLVNDVVP (188 aa)) is enoyl-CoA hydratase. Residues 308-706 (RKVKKAVILG…TMARENVSFF (399 aa)) are 3-hydroxyacyl-CoA dehydrogenase.

It in the N-terminal section; belongs to the enoyl-CoA hydratase/isomerase family. In the central section; belongs to the 3-hydroxyacyl-CoA dehydrogenase family. Heterotetramer of two alpha chains (FadJ) and two beta chains (FadI).

Its subcellular location is the cytoplasm. It catalyses the reaction a (3S)-3-hydroxyacyl-CoA = a (2E)-enoyl-CoA + H2O. It carries out the reaction a 4-saturated-(3S)-3-hydroxyacyl-CoA = a (3E)-enoyl-CoA + H2O. The catalysed reaction is a (3S)-3-hydroxyacyl-CoA + NAD(+) = a 3-oxoacyl-CoA + NADH + H(+). The enzyme catalyses (3S)-3-hydroxybutanoyl-CoA = (3R)-3-hydroxybutanoyl-CoA. It participates in lipid metabolism; fatty acid beta-oxidation. Its function is as follows. Catalyzes the formation of a hydroxyacyl-CoA by addition of water on enoyl-CoA. Also exhibits 3-hydroxyacyl-CoA epimerase and 3-hydroxyacyl-CoA dehydrogenase activities. The polypeptide is Fatty acid oxidation complex subunit alpha (Shewanella sp. (strain W3-18-1)).